Reading from the N-terminus, the 65-residue chain is Cold shock-like protein CspC (65 aa).

The CSD domain maps to Gly3 to Val62.

As to quaternary structure, homodimer.

The protein localises to the cytoplasm. This Bacillus cereus protein is Cold shock-like protein CspC (cspC).